The chain runs to 449 residues: MSTEPLADPAAGLGDPYAASSRETTEGRVYTVTGGDWDEFIDESAGEERIVINFGPQHPSAHGVLRLVFELEGETIVKARSVIGYLHTGIEKNVEYRTWTQGVTFVTRMDYLAPLHNETAYCMAVEKLLGVEAPPRAQTFRVMLMELSRIASHLVFLATGAMEMGATTGMTFGFREREEVLHLLEYLTGLRMNHAFVRPGGVAQDLPEDYRQKVLDFIKVMDSRLPSYDKLFTGQPIWKQRLKDVGYLPLDGCMQLGVTGPVLRSAGLAWDLRKVQPYCGYEDYEFEVPTSTGADCYARYLLRLEEMHQSLKIIRQCLDKMEPGPVMVSDAKIAWPAKLTIGPDGMGNSLEHVRKIMGQSMESLIHHFKLVTEGFDVPPGQVYVPVESPRGELGYHVVSDGGTRPMRVHVREPSFVNLQALPAMVEGGLMADAIASLASLDPVMGGVDR.

Belongs to the complex I 49 kDa subunit family. In terms of assembly, NDH-1 is composed of 14 different subunits. Subunits NuoB, C, D, E, F, and G constitute the peripheral sector of the complex.

The protein resides in the cell membrane. The catalysed reaction is a quinone + NADH + 5 H(+)(in) = a quinol + NAD(+) + 4 H(+)(out). NDH-1 shuttles electrons from NADH, via FMN and iron-sulfur (Fe-S) centers, to quinones in the respiratory chain. The immediate electron acceptor for the enzyme in this species is believed to be a menaquinone. Couples the redox reaction to proton translocation (for every two electrons transferred, four hydrogen ions are translocated across the cytoplasmic membrane), and thus conserves the redox energy in a proton gradient. The protein is NADH-quinone oxidoreductase subunit D of Saccharopolyspora erythraea (strain ATCC 11635 / DSM 40517 / JCM 4748 / NBRC 13426 / NCIMB 8594 / NRRL 2338).